A 362-amino-acid polypeptide reads, in one-letter code: Probable protein phosphatase 2C 24 (362 aa).

Residues Arg77–Leu360 form the PPM-type phosphatase domain. Asp117, Gly118, Asp295, and Asp351 together coordinate Mn(2+).

The protein belongs to the PP2C family. Mg(2+) serves as cofactor. It depends on Mn(2+) as a cofactor.

It catalyses the reaction O-phospho-L-seryl-[protein] + H2O = L-seryl-[protein] + phosphate. It carries out the reaction O-phospho-L-threonyl-[protein] + H2O = L-threonyl-[protein] + phosphate. This Arabidopsis thaliana (Mouse-ear cress) protein is Probable protein phosphatase 2C 24.